Reading from the N-terminus, the 208-residue chain is Transmembrane protein 222 (208 aa).

The interval 1-34 (MAEAEGSSPLLLQPPPPPPRMAEVETPTGAETDM) is disordered. Residues 1–55 (MAEAEGSSPLLLQPPPPPPRMAEVETPTGAETDMKQYHGSGGVVMDVERSRFPYC) are Extracellular-facing. A helical transmembrane segment spans residues 56–76 (VVWTPIPVLTWFFPIIGHMGI). Topologically, residues 77 to 164 (CTSAGVIRDF…MRYNNSTNWN (88 aa)) are cytoplasmic. A helical membrane pass occupies residues 165–185 (MVTLCCFCLIYGKYVSVGAFV). Position 186 (lysine 186) is a topological domain, extracellular. Residues 187–207 (TWLPFVLLLGIILTVSLVFNL) traverse the membrane as a helical segment. Position 208 (arginine 208) is a topological domain, cytoplasmic.

The protein resides in the membrane. It is found in the cell projection. Its subcellular location is the dendrite. The polypeptide is Transmembrane protein 222 (Tmem222) (Mus musculus (Mouse)).